The following is a 480-amino-acid chain: Plant UBX domain-containing protein 10 (480 aa).

Disordered regions lie at residues 47 to 78 (DASSSAVDGGGNNRDHDHNNATVTPDYPPRGI) and 335 to 383 (ADQA…AARV). Residues 330–389 (RAALEADQAREQQRQEEKERLEREAAEAERKLKEEEEARERAAREAEERQAARVRMRQEK) are a coiled coil. Residues 336-383 (DQAREQQRQEEKERLEREAAEAERKLKEEEEARERAAREAEERQAARV) are compositionally biased toward basic and acidic residues. A UBX domain is found at 399 to 477 (KGPDVTQVLV…GLHPQASLFI (79 aa)).

The protein is Plant UBX domain-containing protein 10 of Arabidopsis thaliana (Mouse-ear cress).